The sequence spans 367 residues: Probable butyrate kinase (367 aa).

This sequence belongs to the acetokinase family.

It localises to the cytoplasm. It catalyses the reaction butanoate + ATP = butanoyl phosphate + ADP. This chain is Probable butyrate kinase, found in Bacillus cereus (strain G9842).